Consider the following 730-residue polypeptide: Catalase-peroxidase 1 (730 aa).

The tract at residues 1–24 (MQEKGKCPVTGMTKHKTSGGTTNQ) is disordered. A cross-link (tryptophyl-tyrosyl-methioninium (Trp-Tyr) (with M-244)) is located at residues 95–218 (WHSAGTYRMG…LAAVQMGLIY (124 aa)). His-96 functions as the Proton acceptor in the catalytic mechanism. The tryptophyl-tyrosyl-methioninium (Tyr-Met) (with W-95) cross-link spans 218-244 (YVNPEGPNGQPSALASGKDIRDTFARM). His-259 provides a ligand contact to heme b.

It belongs to the peroxidase family. Peroxidase/catalase subfamily. In terms of assembly, homodimer or homotetramer. The cofactor is heme b. Post-translationally, formation of the three residue Trp-Tyr-Met cross-link is important for the catalase, but not the peroxidase activity of the enzyme.

The enzyme catalyses H2O2 + AH2 = A + 2 H2O. The catalysed reaction is 2 H2O2 = O2 + 2 H2O. Its function is as follows. Bifunctional enzyme with both catalase and broad-spectrum peroxidase activity. In Alkaliphilus metalliredigens (strain QYMF), this protein is Catalase-peroxidase 1.